The chain runs to 397 residues: Lysophospholipid transporter LplT (397 aa).

The Periplasmic portion of the chain corresponds to M1 to K17. A helical membrane pass occupies residues A18–L38. Residues A39–P52 lie on the Cytoplasmic side of the membrane. Residues I53–A73 traverse the membrane as a helical segment. At D74–L90 the chain is on the periplasmic side. The chain crosses the membrane as a helical span at residues L91 to V111. The Cytoplasmic segment spans residues G112 to T144. Residues I145–V165 traverse the membrane as a helical segment. Residue A166 is a topological domain, periplasmic. A helical membrane pass occupies residues L167–L187. Residues A188 to S226 lie on the Cytoplasmic side of the membrane. A helical membrane pass occupies residues L227 to L247. The Periplasmic segment spans residues G248–T256. A helical transmembrane segment spans residues Y257–V277. Residues T278 to E280 are Cytoplasmic-facing. A helical transmembrane segment spans residues T281 to L301. Residues Q302–E304 lie on the Periplasmic side of the membrane. The chain crosses the membrane as a helical span at residues L305–P325. Over L326 to A343 the chain is Cytoplasmic. Residues I344–L364 traverse the membrane as a helical segment. Residues A365–V366 lie on the Periplasmic side of the membrane. A helical membrane pass occupies residues M367 to I387. Over T388–H397 the chain is Cytoplasmic.

This sequence belongs to the major facilitator superfamily. LplT (TC 2.A.1.42) family.

It localises to the cell inner membrane. Its function is as follows. Catalyzes the facilitated diffusion of 2-acyl-glycero-3-phosphoethanolamine (2-acyl-GPE) into the cell. This is Lysophospholipid transporter LplT from Escherichia coli (strain SE11).